Reading from the N-terminus, the 121-residue chain is Large ribosomal subunit protein uL14 (121 aa).

The protein belongs to the universal ribosomal protein uL14 family. As to quaternary structure, part of the 50S ribosomal subunit. Forms a cluster with proteins L3 and L19. In the 70S ribosome, L14 and L19 interact and together make contacts with the 16S rRNA in bridges B5 and B8.

Functionally, binds to 23S rRNA. Forms part of two intersubunit bridges in the 70S ribosome. In Pseudoalteromonas atlantica (strain T6c / ATCC BAA-1087), this protein is Large ribosomal subunit protein uL14.